We begin with the raw amino-acid sequence, 432 residues long: MANVVVIGAQWGDEGKGKVVDIYTEFADNVVRYQGGNNAGHTLVVGDEKVILHLIPSGILHEGKRCVIGNGVVLDPEVFIMEITKLKANGYLKDDKMLLLSEALHIIMPYHKRIDIAREKKSGSKKIGTTGRGIGPAYEDKIGRRGIRLMDLLDEKAFTRKVKEVLEEKNLILTQLLGDQPFTFEEIYEEYMKYAETLRKYAADTSLILHQETKAGKSLLFEGAQGTLLDVDHGTYPYVTSSSTCSGGACTGSGVSPREIHEVIGISKAYATRVGSGPFPTELEDETGEQLRQAGREFGSTTGRPRRTGWYDALVARYAVRVNGLSGIAITKLDVLSGQETVKVCTAYNYKGQVLTEVPASLEIMEQCTPIYEELPGWNDDITGAKSMAELPKNARDYVARIEKLSGAPVVLVSVGPRRDETIVLRNPFELN.

GTP is bound by residues 12 to 18 (GDEGKGK) and 40 to 42 (GHT). Aspartate 13 (proton acceptor) is an active-site residue. Aspartate 13 and glycine 40 together coordinate Mg(2+). IMP contacts are provided by residues 13–16 (DEGK), 38–41 (NAGH), threonine 130, arginine 144, glutamine 225, threonine 240, and arginine 304. The Proton donor role is filled by histidine 41. 300–306 (STTGRPR) contributes to the substrate binding site. Residues arginine 306, 332–334 (KLD), and 414–416 (SVG) each bind GTP.

Belongs to the adenylosuccinate synthetase family. In terms of assembly, homodimer. Mg(2+) serves as cofactor.

The protein localises to the cytoplasm. It catalyses the reaction IMP + L-aspartate + GTP = N(6)-(1,2-dicarboxyethyl)-AMP + GDP + phosphate + 2 H(+). The protein operates within purine metabolism; AMP biosynthesis via de novo pathway; AMP from IMP: step 1/2. Plays an important role in the de novo pathway of purine nucleotide biosynthesis. Catalyzes the first committed step in the biosynthesis of AMP from IMP. The protein is Adenylosuccinate synthetase of Citrifermentans bemidjiense (strain ATCC BAA-1014 / DSM 16622 / JCM 12645 / Bem) (Geobacter bemidjiensis).